The following is a 45-amino-acid chain: Rubredoxin-1 (45 aa).

Position 1 is an N-formylmethionine (Met-1). Residues 1-45 enclose the Rubredoxin-like domain; it reads MQKYVCNVCGYEYDPAEHDNVPFDQLPDDWCCPVCGVSKDQFSPA. Residues Cys-6, Cys-9, Cys-32, and Cys-35 each coordinate Fe cation.

It belongs to the rubredoxin family. The cofactor is Fe(3+).

It localises to the cytoplasm. Rubredoxin is a small nonheme, iron protein lacking acid-labile sulfide. Its single Fe, chelated to 4 Cys, functions as an electron acceptor and may also stabilize the conformation of the molecule. In terms of biological role, electron acceptor for cytoplasmic lactate dehydrogenase. The polypeptide is Rubredoxin-1 (rd1) (Desulfovibrio desulfuricans (strain ATCC 27774 / DSM 6949 / MB)).